Consider the following 331-residue polypeptide: Glyoxylate reductase (331 aa).

NADP(+)-binding positions include 158–161 (FGRI), 180–182 (SRT), and 239–241 (TSR). Catalysis depends on residues Arg-241 and Glu-270. His-288 functions as the Proton donor in the catalytic mechanism. 288–290 (HIG) lines the NADP(+) pocket.

This sequence belongs to the D-isomer specific 2-hydroxyacid dehydrogenase family. GyaR subfamily. Homodimer.

The protein localises to the cytoplasm. The enzyme catalyses glycolate + NAD(+) = glyoxylate + NADH + H(+). The sequence is that of Glyoxylate reductase from Thermococcus litoralis (strain ATCC 51850 / DSM 5473 / JCM 8560 / NS-C).